The sequence spans 166 residues: Ribosome-binding factor A (166 aa).

Positions 122–166 (HVADETDVEDSTDHEDDVTNSEDETKHVDIDTDSEEGTNTDGKAQ) are disordered. Over residues 126–143 (ETDVEDSTDHEDDVTNSE) the composition is skewed to acidic residues.

Belongs to the RbfA family. Monomer. Binds 30S ribosomal subunits, but not 50S ribosomal subunits or 70S ribosomes.

The protein resides in the cytoplasm. One of several proteins that assist in the late maturation steps of the functional core of the 30S ribosomal subunit. Associates with free 30S ribosomal subunits (but not with 30S subunits that are part of 70S ribosomes or polysomes). Required for efficient processing of 16S rRNA. May interact with the 5'-terminal helix region of 16S rRNA. The polypeptide is Ribosome-binding factor A (Pseudoalteromonas translucida (strain TAC 125)).